The sequence spans 808 residues: Digalactosyldiacylglycerol synthase 1, chloroplastic (808 aa).

Residues 1-23 (MVKETLIPPSSTSMTTGTSSSSS) form a disordered region. The transit peptide at 1–58 (MVKETLIPPSSTSMTTGTSSSSSLSMTLSSTNALSFLSKGWREVWDSADADLQLMRDR) directs the protein to the chloroplast. Low complexity predominate over residues 10–23 (SSTSMTTGTSSSSS).

The protein belongs to the glycosyltransferase group 1 family. Glycosyltransferase 4 subfamily.

The protein localises to the plastid. It localises to the chloroplast outer membrane. It carries out the reaction a 1,2-diacyl-3-O-(beta-D-galactosyl)-sn-glycerol + UDP-alpha-D-galactose = a 1,2-diacyl-3-O-[alpha-D-galactosyl-(1-&gt;6)-beta-D-galactosyl]-sn-glycerol + UDP + H(+). In terms of biological role, involved in the synthesis of diacylglycerol galactolipids that are specifically found in thylakoid membranes. Specific for alpha-glycosidic linkages. Responsible for the final assembly of galactolipids in photosynthetic membranes. Digalactosyldiacylglycerol (DGDG) provides stability to the photosystem I (PSI) complex, especially to the PsaA, PsaB, PsaC, PsaL and PsaH subunits. This Arabidopsis thaliana (Mouse-ear cress) protein is Digalactosyldiacylglycerol synthase 1, chloroplastic.